Consider the following 225-residue polypeptide: Ribosome maturation factor RimM (225 aa).

In terms of domain architecture, PRC barrel spans 144–225 (ADEFYWVDLI…RIVVDWEADY (82 aa)).

The protein belongs to the RimM family. Binds ribosomal protein uS19.

The protein resides in the cytoplasm. In terms of biological role, an accessory protein needed during the final step in the assembly of 30S ribosomal subunit, possibly for assembly of the head region. Essential for efficient processing of 16S rRNA. May be needed both before and after RbfA during the maturation of 16S rRNA. It has affinity for free ribosomal 30S subunits but not for 70S ribosomes. The polypeptide is Ribosome maturation factor RimM (Burkholderia orbicola (strain MC0-3)).